A 148-amino-acid chain; its full sequence is Augurin (148 aa).

An N-terminal signal peptide occupies residues 1 to 31; the sequence is MSTSSARPAVLALAGLALLLLLCLGPDGISG. Propeptides lie at residues 32 to 70 and 133 to 148; these read NKLKKMLQKREGPVPSKTNVAVAENTAKEFLGGLKRAKR and SRESFRHGASVNYNDY.

Belongs to the augurin family. As to expression, expressed in the intermediate lobe of pituitary, glomerular layer of adrenal cortex, choroid plexus and atrioventricular node of the heart. Expressed in the brain with high expression in the choroid plexus and the epithelial lining of the central canal and expression in the gray matter of the spinal cord (at protein level).

The protein localises to the secreted. It is found in the cytoplasm. It localises to the apical cell membrane. In terms of biological role, probable hormone that may attenuate cell proliferation and induce senescence of oligodendrocyte and neural precursor cells in the central nervous system. ECRG4-induced senescence is characterized by G1 arrest, RB1 dephosphorylation and accelerated CCND1 and CCND3 proteasomal degradation. In Mus musculus (Mouse), this protein is Augurin.